The following is a 64-amino-acid chain: Large ribosomal subunit protein bL33c (64 aa).

This sequence belongs to the bacterial ribosomal protein bL33 family.

The protein resides in the plastid. Its subcellular location is the cyanelle. The chain is Large ribosomal subunit protein bL33c (rpl33) from Cyanophora paradoxa.